We begin with the raw amino-acid sequence, 337 residues long: Ribosomal RNA small subunit methyltransferase H (337 aa).

Residues 36–38 (GGH), D56, F82, D100, and Q107 each bind S-adenosyl-L-methionine. The interval 317 to 337 (RRSGRIPNPQSPIPASQGDAR) is disordered.

The protein belongs to the methyltransferase superfamily. RsmH family.

The protein localises to the cytoplasm. It catalyses the reaction cytidine(1402) in 16S rRNA + S-adenosyl-L-methionine = N(4)-methylcytidine(1402) in 16S rRNA + S-adenosyl-L-homocysteine + H(+). Specifically methylates the N4 position of cytidine in position 1402 (C1402) of 16S rRNA. The polypeptide is Ribosomal RNA small subunit methyltransferase H (Xanthomonas oryzae pv. oryzae (strain KACC10331 / KXO85)).